A 90-amino-acid polypeptide reads, in one-letter code: Probable Fe(2+)-trafficking protein (90 aa).

Belongs to the Fe(2+)-trafficking protein family.

Could be a mediator in iron transactions between iron acquisition and iron-requiring processes, such as synthesis and/or repair of Fe-S clusters in biosynthetic enzymes. The chain is Probable Fe(2+)-trafficking protein from Acidovorax ebreus (strain TPSY) (Diaphorobacter sp. (strain TPSY)).